We begin with the raw amino-acid sequence, 316 residues long: Protein YIPF2 (316 aa).

Ala2 bears the N-acetylalanine mark. Residues 2 to 124 lie on the Cytoplasmic side of the membrane; sequence ASADELTFHE…LRNRPDLYGP (123 aa). Residues 16-37 form a disordered region; the sequence is TNLLADTPDAATTSRSDQLTPQ. The span at 25-36 shows a compositional bias: polar residues; it reads AATTSRSDQLTP. A helical transmembrane segment spans residues 125-145; it reads FWICATLAFVLAVTGNLTLVL. Topologically, residues 146–163 are lumenal; sequence AQRRDPSIHYSPQFHKVT. Residues 164 to 184 traverse the membrane as a helical segment; the sequence is VAGISIYCYAWLVPLALWGFL. Residues 185–196 are Cytoplasmic-facing; that stretch reads RWRKGVQERMGP. A helical membrane pass occupies residues 197-219; sequence YTFLETVCIYGYSLFVFIPMVVL. Residues 220 to 231 lie on the Lumenal side of the membrane; sequence WLIPVPWLQWLF. The chain crosses the membrane as a helical span at residues 232-252; it reads GALALGLSAAGLVFTLWPVVR. Topologically, residues 253–256 are cytoplasmic; sequence EDTR. Residues 257–277 traverse the membrane as a helical segment; sequence LVATVLLSVVVLLHALLAMGC. Topologically, residues 278 to 316 are lumenal; that stretch reads KLYFFQSLPPENVAPPPQITSLPSNIALSPTLPQSLAPS.

Belongs to the YIP1 family. Interacts with YIPF6; this interaction may stabilize YIPF2. May also form a ternary complex with YIPF1 and YIPF6.

The protein localises to the golgi apparatus. The protein resides in the cis-Golgi network membrane. It is found in the trans-Golgi network membrane. It localises to the late endosome membrane. In Homo sapiens (Human), this protein is Protein YIPF2 (YIPF2).